A 355-amino-acid polypeptide reads, in one-letter code: Guanine nucleotide-binding protein subunit beta-5a (355 aa).

The tract at residues 1-23 (MAAQEEPAQPGDSLATLKSESDT) is disordered. WD repeat units follow at residues 63-102 (GHGN…KEHA), 105-144 (MPCT…NENL), 153-194 (MHTN…QSFH), 195-238 (GHAA…QSFE), 239-278 (SHDS…EVAI), 280-322 (SKES…RVSI), and 325-355 (GHEN…RIWA).

It belongs to the WD repeat G protein beta family. As to quaternary structure, may interact with RGS9; this interaction stabilizes both proteins and increases RGS9 GTPase-activating protein (GAP) activity, hence accelerating the deactivation of D(2) dopamine receptor-mediated signaling.

It is found in the membrane. Functionally, enhances GTPase-activating protein (GAP) activity of regulator of G protein signaling (RGS) proteins, such as RGS7 and RGS9, hence involved in the termination of the signaling initiated by the G protein coupled receptors (GPCRs) by accelerating the GTP hydrolysis on the G-alpha subunits, thereby promoting their inactivation. Increases RGS7 GTPase-activating protein (GAP) activity, thereby regulating mood and cognition. Increases RGS9 GTPase-activating protein (GAP) activity, hence contributes to the deactivation of G protein signaling initiated by D(2) dopamine receptors. Along with gnb5b, plays an important role in neuronal signaling, including in the parasympathetic, but not sympathetic, control of heart rate. The polypeptide is Guanine nucleotide-binding protein subunit beta-5a (Danio rerio (Zebrafish)).